The following is a 350-amino-acid chain: Biotin synthase (350 aa).

The 219-residue stretch at 38 to 256 (NYVQVSTLLS…IAVARIMMPT (219 aa)) folds into the Radical SAM core domain. 3 residues coordinate [4Fe-4S] cluster: cysteine 53, cysteine 57, and cysteine 60. [2Fe-2S] cluster-binding residues include cysteine 97, cysteine 128, cysteine 188, and arginine 260.

It belongs to the radical SAM superfamily. Biotin synthase family. In terms of assembly, homodimer. [4Fe-4S] cluster is required as a cofactor. It depends on [2Fe-2S] cluster as a cofactor.

The enzyme catalyses (4R,5S)-dethiobiotin + (sulfur carrier)-SH + 2 reduced [2Fe-2S]-[ferredoxin] + 2 S-adenosyl-L-methionine = (sulfur carrier)-H + biotin + 2 5'-deoxyadenosine + 2 L-methionine + 2 oxidized [2Fe-2S]-[ferredoxin]. Its pathway is cofactor biosynthesis; biotin biosynthesis; biotin from 7,8-diaminononanoate: step 2/2. Functionally, catalyzes the conversion of dethiobiotin (DTB) to biotin by the insertion of a sulfur atom into dethiobiotin via a radical-based mechanism. This is Biotin synthase from Vibrio vulnificus (strain CMCP6).